Reading from the N-terminus, the 510-residue chain is tRNA-2-methylthio-N(6)-dimethylallyladenosine synthase (510 aa).

The tract at residues 1–25 (MSGFNDSPVPESAEKADGLLSQERG) is disordered. The MTTase N-terminal domain occupies 34–154 (RKLFVKSYGC…LPDLLRRVAH (121 aa)). [4Fe-4S] cluster-binding residues include Cys43, Cys79, Cys117, Cys195, Cys199, and Cys202. In terms of domain architecture, Radical SAM core spans 181–414 (AERGVGAFVT…QALLEEQRQA (234 aa)). In terms of domain architecture, TRAM spans 417-479 (KAMIGRVLPV…PNSFHGRLLA (63 aa)). Residues 484 to 493 (QESAQGQESA) are compositionally biased toward polar residues. The segment at 484-510 (QESAQGQESAQGMERMEQNARAWEVPV) is disordered.

It belongs to the methylthiotransferase family. MiaB subfamily. In terms of assembly, monomer. [4Fe-4S] cluster serves as cofactor.

The protein resides in the cytoplasm. It carries out the reaction N(6)-dimethylallyladenosine(37) in tRNA + (sulfur carrier)-SH + AH2 + 2 S-adenosyl-L-methionine = 2-methylsulfanyl-N(6)-dimethylallyladenosine(37) in tRNA + (sulfur carrier)-H + 5'-deoxyadenosine + L-methionine + A + S-adenosyl-L-homocysteine + 2 H(+). In terms of biological role, catalyzes the methylthiolation of N6-(dimethylallyl)adenosine (i(6)A), leading to the formation of 2-methylthio-N6-(dimethylallyl)adenosine (ms(2)i(6)A) at position 37 in tRNAs that read codons beginning with uridine. The chain is tRNA-2-methylthio-N(6)-dimethylallyladenosine synthase from Beijerinckia indica subsp. indica (strain ATCC 9039 / DSM 1715 / NCIMB 8712).